A 434-amino-acid polypeptide reads, in one-letter code: Solute carrier RCH1 (434 aa).

At 1–15 (MKTQYSLIRKIWAHS) the chain is on the cytoplasmic side. Residues 16 to 36 (VTEFLKSQWFFICLAILIVIA) form a helical membrane-spanning segment. Residues 37-50 (RFAPNFARDGGLIK) lie on the Extracellular side of the membrane. The helical transmembrane segment at 51–71 (GQYSIGYGCVAWIFLQSGLGM) threads the bilayer. The Cytoplasmic portion of the chain corresponds to 72–87 (KSRSLMANMLNWRAHA). Residues 88-108 (TILVLSFLITSSIVYGFCCAV) traverse the membrane as a helical segment. Residues 109 to 118 (KAANDPKIDD) are Extracellular-facing. A helical membrane pass occupies residues 119-139 (WVLIGLILTATCPTTVASNVI). Residues 140–149 (MTTNAGGNSL) are Cytoplasmic-facing. Residues 150–170 (LCVCEVFIGNLLGAFITPALV) traverse the membrane as a helical segment. Residues 171 to 199 (QMFTNRAPFAYGNPATGNGIGALYGRVMK) are Extracellular-facing. The helical transmembrane segment at 200 to 220 (QVGLSVFVPLFVGQVIQNCFP) threads the bilayer. Topologically, residues 221–234 (KGTAYYLGFLKKYH) are cytoplasmic. Residues 235 to 255 (IKIGSYMLLLIMFSSFSTAFY) form a helical membrane-spanning segment. The Extracellular segment spans residues 256 to 264 (QDAFTSVSH). Residues 265 to 285 (VCIIFLCFFNLGIYIFFTGLS) form a helical membrane-spanning segment. Over 286 to 327 (YLCARPWFILKLFPHEPIEGKSTRLYRYSYNIFRPFYYSKED) the chain is Cytoplasmic. A helical membrane pass occupies residues 328 to 348 (AICIMFCGPAKTAALGVSLIT). The Extracellular segment spans residues 349–362 (SQYGDKKEHLGKLL). The chain crosses the membrane as a helical span at residues 363–383 (VPLVLYQVEQVMTANFFVSLF). The Cytoplasmic segment spans residues 384–434 (KRWIQKDAQADGSESSCANENEEVDLEKIISIGTGENQSVLSNNVPYTQPR). The residue at position 425 (Ser-425) is a Phosphoserine.

The protein belongs to the bile acid:sodium symporter (BASS) (TC 2.A.28) family.

The protein resides in the cell membrane. It is found in the bud neck. Solute carrier protein that negatively regulates the cytosolic calcium homeostasis in response to high levels of extracellular calcium. The sequence is that of Solute carrier RCH1 from Saccharomyces cerevisiae (strain ATCC 204508 / S288c) (Baker's yeast).